An 84-amino-acid chain; its full sequence is ATP synthase subunit c (84 aa).

The next 2 membrane-spanning stretches (helical) occupy residues I9–I29 and I54–I74.

The protein belongs to the ATPase C chain family. As to quaternary structure, F-type ATPases have 2 components, F(1) - the catalytic core - and F(0) - the membrane proton channel. F(1) has five subunits: alpha(3), beta(3), gamma(1), delta(1), epsilon(1). F(0) has three main subunits: a(1), b(2) and c(10-14). The alpha and beta chains form an alternating ring which encloses part of the gamma chain. F(1) is attached to F(0) by a central stalk formed by the gamma and epsilon chains, while a peripheral stalk is formed by the delta and b chains.

It localises to the cell inner membrane. Functionally, f(1)F(0) ATP synthase produces ATP from ADP in the presence of a proton or sodium gradient. F-type ATPases consist of two structural domains, F(1) containing the extramembraneous catalytic core and F(0) containing the membrane proton channel, linked together by a central stalk and a peripheral stalk. During catalysis, ATP synthesis in the catalytic domain of F(1) is coupled via a rotary mechanism of the central stalk subunits to proton translocation. In terms of biological role, key component of the F(0) channel; it plays a direct role in translocation across the membrane. A homomeric c-ring of between 10-14 subunits forms the central stalk rotor element with the F(1) delta and epsilon subunits. The sequence is that of ATP synthase subunit c from Haemophilus ducreyi (strain 35000HP / ATCC 700724).